We begin with the raw amino-acid sequence, 256 residues long: Large ribosomal subunit protein eL8B (256 aa).

The disordered stretch occupies residues 1–37 (MAPGKKVAPAPFGAKSTKSNKAKNPLTHSTPKNFGIG).

Belongs to the eukaryotic ribosomal protein eL8 family. In terms of assembly, component of the large ribosomal subunit (LSU). Mature yeast ribosomes consist of a small (40S) and a large (60S) subunit. The 40S small subunit contains 1 molecule of ribosomal RNA (18S rRNA) and 33 different proteins (encoded by 57 genes). The large 60S subunit contains 3 rRNA molecules (25S, 5.8S and 5S rRNA) and 46 different proteins (encoded by 81 genes).

The protein localises to the cytoplasm. Functionally, component of the ribosome, a large ribonucleoprotein complex responsible for the synthesis of proteins in the cell. The small ribosomal subunit (SSU) binds messenger RNAs (mRNAs) and translates the encoded message by selecting cognate aminoacyl-transfer RNA (tRNA) molecules. The large subunit (LSU) contains the ribosomal catalytic site termed the peptidyl transferase center (PTC), which catalyzes the formation of peptide bonds, thereby polymerizing the amino acids delivered by tRNAs into a polypeptide chain. The nascent polypeptides leave the ribosome through a tunnel in the LSU and interact with protein factors that function in enzymatic processing, targeting, and the membrane insertion of nascent chains at the exit of the ribosomal tunnel. In Saccharomyces cerevisiae (strain ATCC 204508 / S288c) (Baker's yeast), this protein is Large ribosomal subunit protein eL8B.